Reading from the N-terminus, the 562-residue chain is Gut esterase 1 (562 aa).

The N-terminal stretch at 1–16 (MRIFLVSVILINACWA) is a signal peptide. N73 carries N-linked (GlcNAc...) asparagine; atypical glycosylation. Cysteines 75 and 93 form a disulfide. The active-site Acyl-ester intermediate is S198. A disulfide bridge links C250 with C258. Catalysis depends on charge relay system residues E319 and H452. The Prevents secretion from ER signature appears at 559 to 562 (KDEL).

Belongs to the type-B carboxylesterase/lipase family. Expressed only in the intestine.

The protein resides in the endoplasmic reticulum lumen. It carries out the reaction a carboxylic ester + H2O = an alcohol + a carboxylate + H(+). The chain is Gut esterase 1 (ges-1) from Caenorhabditis elegans.